We begin with the raw amino-acid sequence, 273 residues long: Eukaryotic translation initiation factor 3 subunit G-2 (273 aa).

Residues 168-192 are disordered; it reads PPFMKDGGGGSGGKNWGRGRDRDDS. The span at 173–183 shows a compositional bias: gly residues; it reads DGGGGSGGKNW. Positions 193–271 constitute an RRM domain; that stretch reads SAVRISNLSE…LILCVEWSKP (79 aa).

This sequence belongs to the eIF-3 subunit G family. In terms of assembly, component of the eukaryotic translation initiation factor 3 (eIF-3) complex. The eIF-3 complex interacts with pix.

The protein localises to the cytoplasm. Functionally, RNA-binding component of the eukaryotic translation initiation factor 3 (eIF-3) complex, which is involved in protein synthesis of a specialized repertoire of mRNAs and, together with other initiation factors, stimulates binding of mRNA and methionyl-tRNAi to the 40S ribosome. The eIF-3 complex specifically targets and initiates translation of a subset of mRNAs involved in cell proliferation. This subunit can bind 18S rRNA. The polypeptide is Eukaryotic translation initiation factor 3 subunit G-2 (Drosophila erecta (Fruit fly)).